Consider the following 1368-residue polypeptide: DNA-directed RNA polymerase subunit beta (1368 aa).

It belongs to the RNA polymerase beta chain family. The RNAP catalytic core consists of 2 alpha, 1 beta, 1 beta' and 1 omega subunit. When a sigma factor is associated with the core the holoenzyme is formed, which can initiate transcription.

It carries out the reaction RNA(n) + a ribonucleoside 5'-triphosphate = RNA(n+1) + diphosphate. In terms of biological role, DNA-dependent RNA polymerase catalyzes the transcription of DNA into RNA using the four ribonucleoside triphosphates as substrates. This chain is DNA-directed RNA polymerase subunit beta, found in Cupriavidus taiwanensis (strain DSM 17343 / BCRC 17206 / CCUG 44338 / CIP 107171 / LMG 19424 / R1) (Ralstonia taiwanensis (strain LMG 19424)).